The following is a 345-amino-acid chain: Phosphoribosylformylglycinamidine cyclo-ligase (345 aa).

Belongs to the AIR synthase family.

The protein localises to the cytoplasm. It carries out the reaction 2-formamido-N(1)-(5-O-phospho-beta-D-ribosyl)acetamidine + ATP = 5-amino-1-(5-phospho-beta-D-ribosyl)imidazole + ADP + phosphate + H(+). Its pathway is purine metabolism; IMP biosynthesis via de novo pathway; 5-amino-1-(5-phospho-D-ribosyl)imidazole from N(2)-formyl-N(1)-(5-phospho-D-ribosyl)glycinamide: step 2/2. This Actinobacillus succinogenes (strain ATCC 55618 / DSM 22257 / CCUG 43843 / 130Z) protein is Phosphoribosylformylglycinamidine cyclo-ligase.